A 644-amino-acid chain; its full sequence is MFQDNPLLAQLKQQLHTQTPRVEGVVKGTEKGFGFLEVDGQKSYFIPPPQMKKVMHGDRIIATLHTDKDREIAEPETLVEPFLSRFVGRVQRKDDRLSIVPDHPLLRDAIQCRPVRELTHSFQNGDWAVAEMCRHPLKGDRAFQADLTAFITNGEDHFVPWWVTLARHNLEREAPAMVESALNDAELEREDLTALNFVTIDSASTEDMDDALFVQDNGDGSWLLTIAIADPTAYVVENSELDLTARKRAFTNYLPGFNIPMLPRDLSDNLCSLRPNERRPVLVCRVTITEEGTLSNDIRFSAAWVESKAKLVYDDVSDWLEGNNRWQPQDTAIAEQITLLKRICDARSNWRQQHALVFKDRPDYRFLLGEKGEVLDIIVEHRRIANRIVEECMIAANVCAALALREHLGFGIYNVHTGFDPALVEQAASVLKANGVGADPQALLTLPGFCELRRHLDALPTQFLDSRIRRFQTFAEISTVPGPHFGLGLEAYATWTSPIRKYGDMVNHRLLKAMITGQQAEKPQEEITVQLAERRRLNRMAERDVGDWLYARYLQPQAGTDTRFTAEIIDITRGGLRVRLLDNGAVAFIPAPFIHAVRDEVVCSQETGTVQIKGETVYSQSDKIEVRIAEVRMETRNVIARPVA.

The 328-residue stretch at 189–516 (REDLTALNFV…NHRLLKAMIT (328 aa)) folds into the RNB domain. The region spanning 561 to 643 (DTRFTAEIID…ETRNVIARPV (83 aa)) is the S1 motif domain.

The protein belongs to the RNR ribonuclease family. RNase II subfamily.

The protein localises to the cytoplasm. The catalysed reaction is Exonucleolytic cleavage in the 3'- to 5'-direction to yield nucleoside 5'-phosphates.. Involved in mRNA degradation. Hydrolyzes single-stranded polyribonucleotides processively in the 3' to 5' direction. The polypeptide is Exoribonuclease 2 (Yersinia pestis bv. Antiqua (strain Antiqua)).